We begin with the raw amino-acid sequence, 130 residues long: Calcitonin gene-related peptide 2 (130 aa).

A signal peptide spans 1-26 (MDFWKFFPFLALSTIWVLCLASSLQA). The propeptide occupies 27–82 (APFRSALESSLDLGTLGDQEKHLLLAALMQDYEQMKARKLEQEEQETKGSRVTAQK). An intrachain disulfide couples C85 to C90. Phenylalanine amide is present on F120. A propeptide spanning residues 127-130 (DLQA) is cleaved from the precursor.

This sequence belongs to the calcitonin family. As to expression, detected in nerve cells of cerebrum, hippocampus and pons/midbrain in newborns, and only in nerve cells of pons/midbrain in adult.

It localises to the secreted. Functionally, CALCB/CGRP2 is a peptide hormone that induces vasodilation mediated by the CALCRL-RAMP1 receptor complex. Dilates a variety of vessels including the coronary, cerebral and systemic vasculature. Its abundance in the CNS also points toward a neurotransmitter or neuromodulator role. In Mus musculus (Mouse), this protein is Calcitonin gene-related peptide 2.